We begin with the raw amino-acid sequence, 435 residues long: Serine--tRNA ligase (435 aa).

238-240 (TAE) contacts L-serine. 269 to 271 (RKE) contacts ATP. Residue Glu-292 participates in L-serine binding. 356-359 (EISS) is a binding site for ATP. Ser-391 serves as a coordination point for L-serine.

It belongs to the class-II aminoacyl-tRNA synthetase family. Type-1 seryl-tRNA synthetase subfamily. As to quaternary structure, homodimer. The tRNA molecule binds across the dimer.

The protein resides in the cytoplasm. It carries out the reaction tRNA(Ser) + L-serine + ATP = L-seryl-tRNA(Ser) + AMP + diphosphate + H(+). The enzyme catalyses tRNA(Sec) + L-serine + ATP = L-seryl-tRNA(Sec) + AMP + diphosphate + H(+). Its pathway is aminoacyl-tRNA biosynthesis; selenocysteinyl-tRNA(Sec) biosynthesis; L-seryl-tRNA(Sec) from L-serine and tRNA(Sec): step 1/1. Its function is as follows. Catalyzes the attachment of serine to tRNA(Ser). Is also able to aminoacylate tRNA(Sec) with serine, to form the misacylated tRNA L-seryl-tRNA(Sec), which will be further converted into selenocysteinyl-tRNA(Sec). This chain is Serine--tRNA ligase, found in Leuconostoc mesenteroides subsp. mesenteroides (strain ATCC 8293 / DSM 20343 / BCRC 11652 / CCM 1803 / JCM 6124 / NCDO 523 / NBRC 100496 / NCIMB 8023 / NCTC 12954 / NRRL B-1118 / 37Y).